The following is a 131-amino-acid chain: Large ribosomal subunit protein bL17 (131 aa).

The protein belongs to the bacterial ribosomal protein bL17 family. As to quaternary structure, part of the 50S ribosomal subunit. Contacts protein L32.

The polypeptide is Large ribosomal subunit protein bL17 (Chromobacterium violaceum (strain ATCC 12472 / DSM 30191 / JCM 1249 / CCUG 213 / NBRC 12614 / NCIMB 9131 / NCTC 9757 / MK)).